A 481-amino-acid chain; its full sequence is UDP-N-acetylmuramoyl-L-alanyl-D-glutamate--L-lysine ligase (481 aa).

Serine 42 contacts UDP-N-acetyl-alpha-D-muramoyl-L-alanyl-D-glutamate. An ATP-binding site is contributed by 118-124 (GTKGKTT). UDP-N-acetyl-alpha-D-muramoyl-L-alanyl-D-glutamate-binding positions include glutamine 158, 160-161 (TT), serine 187, and arginine 195. Lysine 229 carries the post-translational modification N6-carboxylysine. Residues 404-407 (DDPN) carry the L-lysine recognition motif motif.

Belongs to the MurCDEF family. MurE subfamily. Post-translationally, carboxylation is probably crucial for Mg(2+) binding and, consequently, for the gamma-phosphate positioning of ATP.

Its subcellular location is the cytoplasm. The catalysed reaction is UDP-N-acetyl-alpha-D-muramoyl-L-alanyl-D-glutamate + L-lysine + ATP = UDP-N-acetyl-alpha-D-muramoyl-L-alanyl-gamma-D-glutamyl-L-lysine + ADP + phosphate + H(+). Its pathway is cell wall biogenesis; peptidoglycan biosynthesis. Functionally, catalyzes the addition of L-lysine to the nucleotide precursor UDP-N-acetylmuramoyl-L-alanyl-D-glutamate (UMAG) in the biosynthesis of bacterial cell-wall peptidoglycan. The sequence is that of UDP-N-acetylmuramoyl-L-alanyl-D-glutamate--L-lysine ligase from Streptococcus pyogenes serotype M18 (strain MGAS8232).